A 186-amino-acid chain; its full sequence is Hydra actinoporin-like toxin 5 (186 aa).

A signal peptide spans 1–20; it reads MLLYVCLVNLLLQSPSGVDS. The short motif at 158–160 is the Cell attachment site element; that stretch reads RDG.

This sequence belongs to the actinoporin family. HALT subfamily. In terms of assembly, octamer or nonamer in membranes. Monomer in the soluble state. In vitro, interacts with folate receptor alpha (of target organism).

It is found in the nematocyst. It localises to the secreted. Its subcellular location is the target cell membrane. Its function is as follows. Pore-forming protein that forms hydrophilic pores and causes cytolysis. Compared to equinatoxin-2 (AC P61914), it reveals lower cytolysis activity (5-12-fold difference, tested on erythrocytes), a larger pore size (probably 2-3 nm) and different affinity to membrane lipids (100-fold lower affinity to sphingomyelin). Binds to sulfatides (SFT) as well as to the two sphingolipids, lysophosphatidic acid (LPA) and sphingosine-1-phosphate (S1P). It seems to bind more strongly to LPA than to S1P and SFT. Shows cytolytic activity on HeLa cells, with a different potency than its paralogs (from most potent to less potent: HALT-4&gt;HALT-6~HALT-1&gt;HALT-3&gt;HALT-7&gt;HALT-2). Pore formation is a multi-step process that involves specific recognition of membrane lipid by a protein aromatic residues rich region, firm binding to the membrane (mainly driven by hydrophobic interactions) accompanied by the transfer of the N-terminal region to the lipid-water interface and finally pore formation after oligomerization of monomers. In vitro, binds to the folate receptor alpha (FOLR1), a GPI-anchored membrane protein that plays a major role in the uptake of folate/folic acid into cells via endocytosis, suggesting a possible involvement of this receptor in the mechanism of HALT-1-induced cell lysis. In vivo, does not cause visible paralysis in larvae of the blowfly Sarcophaga faculata, the most common arthropod prey of Hydra. In Hydra vulgaris (Hydra), this protein is Hydra actinoporin-like toxin 5.